The chain runs to 216 residues: Somatotropin (216 aa).

The N-terminal stretch at 1-26 is a signal peptide; sequence MAAGPRTSMLLAFALLCLPWTQEVGA. H45 contributes to the Zn(2+) binding site. Residues C78 and C189 are joined by a disulfide bond. S131 carries the post-translational modification Phosphoserine. E198 contacts Zn(2+). C206 and C214 are joined by a disulfide.

This sequence belongs to the somatotropin/prolactin family.

Its subcellular location is the secreted. Plays an important role in growth control. Its major role in stimulating body growth is to stimulate the liver and other tissues to secrete IGF1. It stimulates both the differentiation and proliferation of myoblasts. It also stimulates amino acid uptake and protein synthesis in muscle and other tissues. The protein is Somatotropin (GH1) of Delphinus delphis (Short-beaked common dolphin).